A 215-amino-acid polypeptide reads, in one-letter code: uncharacterized protein (215 aa).

The protein localises to the mitochondrion. This is an uncharacterized protein from Arabidopsis thaliana (Mouse-ear cress).